The sequence spans 253 residues: Sporulated oocyst TA4 antigen (253 aa).

The first 23 residues, 1 to 23, serve as a signal peptide directing secretion; it reads MARLSFVSLLSLSLLFGQQAVRA. Residues 182-184 constitute a propeptide, removed in mature form; that stretch reads RRL.

The TA4 antigen is composed of a 17 kDa and a 8 kDa chain, linked by a disulfide bond.

The protein is Sporulated oocyst TA4 antigen of Eimeria tenella (Coccidian parasite).